Reading from the N-terminus, the 161-residue chain is Cytochrome c-type biogenesis protein CcmE (161 aa).

Residues 1–8 are Cytoplasmic-facing; that stretch reads MNPRRKKR. A helical; Signal-anchor for type II membrane protein membrane pass occupies residues 9-29; it reads LGIVLAIFIGISATIGLMLYA. Residues 30 to 161 lie on the Periplasmic side of the membrane; that stretch reads LNQNMDLFYT…SSEQKQGSGE (132 aa). Heme contacts are provided by His129 and Tyr133. The tract at residues 142 to 161 is disordered; it reads MKKTHEPLQYSSEQKQGSGE. Polar residues predominate over residues 150–161; it reads QYSSEQKQGSGE.

The protein belongs to the CcmE/CycJ family.

It localises to the cell inner membrane. In terms of biological role, heme chaperone required for the biogenesis of c-type cytochromes. Transiently binds heme delivered by CcmC and transfers the heme to apo-cytochromes in a process facilitated by CcmF and CcmH. The protein is Cytochrome c-type biogenesis protein CcmE of Vibrio parahaemolyticus serotype O3:K6 (strain RIMD 2210633).